A 271-amino-acid chain; its full sequence is Orotidine 5'-phosphate decarboxylase (271 aa).

The active-site Proton donor is the K97.

It belongs to the OMP decarboxylase family. Type 2 subfamily.

It catalyses the reaction orotidine 5'-phosphate + H(+) = UMP + CO2. It participates in pyrimidine metabolism; UMP biosynthesis via de novo pathway; UMP from orotate: step 2/2. This Leptospira borgpetersenii serovar Hardjo-bovis (strain JB197) protein is Orotidine 5'-phosphate decarboxylase.